The following is a 197-amino-acid chain: Ribonuclease HII (197 aa).

The RNase H type-2 domain maps to 11-197; it reads HLIAGVDEVG…FAPVKKILGL (187 aa). Asp-17, Glu-18, and Asp-109 together coordinate a divalent metal cation.

Belongs to the RNase HII family. Mn(2+) is required as a cofactor. Requires Mg(2+) as cofactor.

It localises to the cytoplasm. It catalyses the reaction Endonucleolytic cleavage to 5'-phosphomonoester.. Functionally, endonuclease that specifically degrades the RNA of RNA-DNA hybrids. The chain is Ribonuclease HII from Actinobacillus pleuropneumoniae serotype 5b (strain L20).